The chain runs to 424 residues: UPF0229 protein Ping_2705 (424 aa).

The interval 77-108 (PGNQDFIGGDRIERPPSGGAGGSGSGASDSGK) is disordered.

This sequence belongs to the UPF0229 family.

The sequence is that of UPF0229 protein Ping_2705 from Psychromonas ingrahamii (strain DSM 17664 / CCUG 51855 / 37).